The following is an 84-amino-acid chain: Small ribosomal subunit protein uS17 (84 aa).

The protein belongs to the universal ribosomal protein uS17 family. Part of the 30S ribosomal subunit.

Functionally, one of the primary rRNA binding proteins, it binds specifically to the 5'-end of 16S ribosomal RNA. This is Small ribosomal subunit protein uS17 from Proteus mirabilis (strain HI4320).